Here is a 307-residue protein sequence, read N- to C-terminus: Acyl transferase (307 aa).

Residues Ser116, Asp213, and His243 each act as charge relay system in the active site.

Belongs to the LuxD family.

It functions in the pathway lipid metabolism; fatty acid reduction for biolumincescence. Its function is as follows. Acyl transferase is part of the fatty acid reductase system required for aldehyde biosynthesis; it produces fatty acids for the luminescent reaction. In Aliivibrio fischeri (strain ATCC 700601 / ES114) (Vibrio fischeri), this protein is Acyl transferase.